The primary structure comprises 311 residues: Methionyl-tRNA formyltransferase (311 aa).

A (6S)-5,6,7,8-tetrahydrofolate-binding site is contributed by 110 to 113 (SLLP).

This sequence belongs to the Fmt family.

It catalyses the reaction L-methionyl-tRNA(fMet) + (6R)-10-formyltetrahydrofolate = N-formyl-L-methionyl-tRNA(fMet) + (6S)-5,6,7,8-tetrahydrofolate + H(+). Attaches a formyl group to the free amino group of methionyl-tRNA(fMet). The formyl group appears to play a dual role in the initiator identity of N-formylmethionyl-tRNA by promoting its recognition by IF2 and preventing the misappropriation of this tRNA by the elongation apparatus. The sequence is that of Methionyl-tRNA formyltransferase from Streptococcus pyogenes serotype M18 (strain MGAS8232).